Reading from the N-terminus, the 369-residue chain is Nudix hydrolase 8 (369 aa).

The Nudix hydrolase domain occupies 188-318; sequence SHQVGVGGFV…GDKMFKRVIE (131 aa). The Nudix box motif lies at 225–246; it reads GFINESEEIFSGAVREVKEETG. Residues Glu240 and Glu244 each coordinate Mg(2+).

The protein belongs to the Nudix hydrolase family. Mg(2+) is required as a cofactor. The cofactor is Mn(2+). As to expression, expressed in roots, stems and, at lower level, leaves.

Functionally, probably mediates the hydrolysis of some nucleoside diphosphate derivatives. May be involved in plant immunity and act as a positive regulator of defense response through salicylic acid (SA) signaling. This chain is Nudix hydrolase 8 (NUDT8), found in Arabidopsis thaliana (Mouse-ear cress).